The sequence spans 1116 residues: Electrogenic sodium bicarbonate cotransporter 4 (1116 aa).

Residues 1 to 14 (MKVDEEKAGVKKLD) show a composition bias toward basic and acidic residues. 3 disordered regions span residues 1–92 (MKVD…TRSP), 222–257 (PIHRSLADIGKSVSTTNRSSARSSSAGPTLHRSTED), and 431–467 (PGQMNGSVGGGGASAGGGGSGGGAGGSGAGGVGSGDE). The Cytoplasmic portion of the chain corresponds to 1-515 (MKVDEEKAGV…YDGFHLQSIS (515 aa)). Low complexity predominate over residues 233–247 (SVSTTNRSSARSSSA). Over residues 437–464 (SVGGGGASAGGGGSGGGAGGSGAGGVGS) the composition is skewed to gly residues. The chain crosses the membrane as a helical span at residues 516 to 536 (AVLFIYLGCITNAITFGGLLG). Residues 537–558 (DATDNYQGVMESFLGTAMAGSL) lie on the Extracellular side of the membrane. The chain crosses the membrane as a helical span at residues 559–579 (FCLFSGQPLIILSSTGPILIF). The Cytoplasmic segment spans residues 580–600 (EKLLFDFSKANGLDYMEFRLW). The chain crosses the membrane as a helical span at residues 601–621 (IGLHSAIQCLILVATDASFII). At 622-631 (KYITRFTEEG) the chain is on the extracellular side. Residues 632–652 (FSTLISFIFIYDAIKKMIGAF) traverse the membrane as a helical segment. The Cytoplasmic segment spans residues 653-730 (KYYPINTDFK…GGRLLGSSCQ (78 aa)). A helical membrane pass occupies residues 731-751 (FVPDLALMSFILFFGTYSMTL). The Extracellular portion of the chain corresponds to 752-768 (TLKKFKFSRYFPTKVRT). The helical transmembrane segment at 769-789 (LVADFSIVFSILLFCGIDACF) threads the bilayer. Over 790–819 (GLQTPKLHVPSVIKPTRPDRGWFVAPFGKN) the chain is Cytoplasmic. Residues 820–840 (PWWVYPASILPALLVTILIFM) traverse the membrane as a helical segment. The Extracellular portion of the chain corresponds to 841–865 (DQQITAVIVNRKENKLRKAAGYHLD). Residues 866 to 886 (LFWVGILMALCSFTGLPWYVA) form a helical membrane-spanning segment. The Cytoplasmic portion of the chain corresponds to 887-922 (ATVISIAHIDSLKMETETSAPGEQPQFLGVREQRVT). Residues 923 to 943 (GVMVFILTGISVFLAPILKYI) traverse the membrane as a helical segment. The Extracellular segment spans residues 944 to 945 (PM). Residues 946–966 (PVLYGVFLYMGVASLNGIQFW) traverse the membrane as a helical segment. Topologically, residues 967–987 (ERCKLFLMPAKHQPDHAFLRH) are cytoplasmic. 2 consecutive transmembrane segments (helical) span residues 988-1008 (VPLRRIHLFTLVQILCLALLW) and 1009-1029 (ILKSTMAAIIFPVMILGLIIV). At 1030–1116 (RRLLDLIFSQ…KRSSSWSYSL (87 aa)) the chain is on the cytoplasmic side.

The protein belongs to the anion exchanger (TC 2.A.31) family.

It is found in the apical cell membrane. The protein localises to the basolateral cell membrane. It catalyses the reaction 2 hydrogencarbonate(out) + Na(+)(out) = 2 hydrogencarbonate(in) + Na(+)(in). The enzyme catalyses 3 hydrogencarbonate(out) + Na(+)(out) = 3 hydrogencarbonate(in) + Na(+)(in). In terms of biological role, mediates sodium- and bicarbonate-dependent electrogenic sodium bicarbonate cotransport, with a Na(+):HCO3(-) stoichiometry varying from 1:2 to 1:3. In Mus musculus (Mouse), this protein is Electrogenic sodium bicarbonate cotransporter 4 (Slc4a5).